We begin with the raw amino-acid sequence, 427 residues long: Histidine--tRNA ligase (427 aa).

It belongs to the class-II aminoacyl-tRNA synthetase family. In terms of assembly, homodimer.

It is found in the cytoplasm. It catalyses the reaction tRNA(His) + L-histidine + ATP = L-histidyl-tRNA(His) + AMP + diphosphate + H(+). In Mannheimia succiniciproducens (strain KCTC 0769BP / MBEL55E), this protein is Histidine--tRNA ligase.